The chain runs to 338 residues: MVQITKGKFDGLQRLSNDKGVIAALAIDQRGSLKKMIQQAKGTENKKDVEDFKQLVSEELTPYASAILLDLEYGTPAIKARHEGSGLLTSYEKTGYDATTPGKLPDLIEDLSALRIKENGGDAVKILVYYDPDEPAEINEIKYAFLERIGAECRAVDIPFFLEPITYDATVTDSGSLEYAKLKPAKVKASIKEFSKPRYGVDVLKLEVPVNFKYVEGFAEGEVAYTQDEAARHFEECSDLSPLPFIYLSAGVTSEMFHKTIQFANQHNVQYSGVLCGRATWADGIEVYGKQGDDALREWLRTQGKENITSLDKLLDEGAVPWWTKYGSFEDVHVVEKQ.

The protein belongs to the aldolase LacD family.

It carries out the reaction D-tagatofuranose 1,6-bisphosphate = D-glyceraldehyde 3-phosphate + dihydroxyacetone phosphate. Its pathway is carbohydrate metabolism; D-tagatose 6-phosphate degradation; D-glyceraldehyde 3-phosphate and glycerone phosphate from D-tagatose 6-phosphate: step 2/2. The protein is Tagatose 1,6-diphosphate aldolase of Listeria monocytogenes serovar 1/2a (strain ATCC BAA-679 / EGD-e).